Reading from the N-terminus, the 409-residue chain is LL-diaminopimelate aminotransferase (409 aa).

Residues Tyr15 and Gly42 each contribute to the substrate site. Residues Tyr72, 108 to 109, Tyr132, Asn187, Tyr218, and 246 to 248 each bind pyridoxal 5'-phosphate; these read SK and SFS. Substrate is bound by residues Lys109, Tyr132, and Asn187. At Lys249 the chain carries N6-(pyridoxal phosphate)lysine. Pyridoxal 5'-phosphate is bound by residues Arg257 and Asn292. Residues Asn292 and Arg388 each coordinate substrate.

It belongs to the class-I pyridoxal-phosphate-dependent aminotransferase family. LL-diaminopimelate aminotransferase subfamily. As to quaternary structure, homodimer. The cofactor is pyridoxal 5'-phosphate.

It catalyses the reaction (2S,6S)-2,6-diaminopimelate + 2-oxoglutarate = (S)-2,3,4,5-tetrahydrodipicolinate + L-glutamate + H2O + H(+). Its pathway is amino-acid biosynthesis; L-lysine biosynthesis via DAP pathway; LL-2,6-diaminopimelate from (S)-tetrahydrodipicolinate (aminotransferase route): step 1/1. Functionally, involved in the synthesis of meso-diaminopimelate (m-DAP or DL-DAP), required for both lysine and peptidoglycan biosynthesis. Catalyzes the direct conversion of tetrahydrodipicolinate to LL-diaminopimelate. The chain is LL-diaminopimelate aminotransferase from Acaryochloris marina (strain MBIC 11017).